Consider the following 958-residue polypeptide: Valine--tRNA ligase (958 aa).

Positions Pro-45–His-55 match the 'HIGH' region motif. Positions Lys-571–Ser-575 match the 'KMSKS' region motif. ATP is bound at residue Lys-574. The stretch at Ala-892–Ser-958 forms a coiled coil.

Belongs to the class-I aminoacyl-tRNA synthetase family. ValS type 1 subfamily. As to quaternary structure, monomer.

It is found in the cytoplasm. The enzyme catalyses tRNA(Val) + L-valine + ATP = L-valyl-tRNA(Val) + AMP + diphosphate. Functionally, catalyzes the attachment of valine to tRNA(Val). As ValRS can inadvertently accommodate and process structurally similar amino acids such as threonine, to avoid such errors, it has a 'posttransfer' editing activity that hydrolyzes mischarged Thr-tRNA(Val) in a tRNA-dependent manner. This Bradyrhizobium diazoefficiens (strain JCM 10833 / BCRC 13528 / IAM 13628 / NBRC 14792 / USDA 110) protein is Valine--tRNA ligase.